The primary structure comprises 85 residues: Transcriptional repressor protein KorC (85 aa).

The H-T-H motif DNA-binding region spans 28 to 47 (VLHLAGLTGGQAARILGLGA).

Acts with KorA as corepressor in the control of the kilC and kilE operons. In Escherichia coli, this protein is Transcriptional repressor protein KorC (korC).